The primary structure comprises 660 residues: Bifunctional polymyxin resistance protein ArnA (660 aa).

A formyltransferase ArnAFT region spans residues 1–304 (MKAVVFAYHN…EMYLVEGMRF (304 aa)). Histidine 104 functions as the Proton donor; for formyltransferase activity in the catalytic mechanism. Residues arginine 114 and 136–140 (TVKPD) each bind (6R)-10-formyltetrahydrofolate. Positions 316–660 (RRQKVLIMGA…FLKTAVEETK (345 aa)) are dehydrogenase ArnADH. Residues aspartate 349 and 370-371 (DI) contribute to the NAD(+) site. UDP-alpha-D-glucuronate is bound by residues alanine 395, tyrosine 400, and 434-435 (TS). Catalysis depends on glutamate 436, which acts as the Proton acceptor; for decarboxylase activity. Residues arginine 462, asparagine 494, 528–537 (KLIDGGEQKR), and tyrosine 615 each bind UDP-alpha-D-glucuronate. Residue arginine 621 is the Proton donor; for decarboxylase activity of the active site.

It in the N-terminal section; belongs to the Fmt family. UDP-L-Ara4N formyltransferase subfamily. The protein in the C-terminal section; belongs to the NAD(P)-dependent epimerase/dehydratase family. UDP-glucuronic acid decarboxylase subfamily. Homohexamer, formed by a dimer of trimers.

It catalyses the reaction UDP-alpha-D-glucuronate + NAD(+) = UDP-beta-L-threo-pentopyranos-4-ulose + CO2 + NADH. The enzyme catalyses UDP-4-amino-4-deoxy-beta-L-arabinose + (6R)-10-formyltetrahydrofolate = UDP-4-deoxy-4-formamido-beta-L-arabinose + (6S)-5,6,7,8-tetrahydrofolate + H(+). The protein operates within nucleotide-sugar biosynthesis; UDP-4-deoxy-4-formamido-beta-L-arabinose biosynthesis; UDP-4-deoxy-4-formamido-beta-L-arabinose from UDP-alpha-D-glucuronate: step 1/3. Its pathway is nucleotide-sugar biosynthesis; UDP-4-deoxy-4-formamido-beta-L-arabinose biosynthesis; UDP-4-deoxy-4-formamido-beta-L-arabinose from UDP-alpha-D-glucuronate: step 3/3. It participates in bacterial outer membrane biogenesis; lipopolysaccharide biosynthesis. Its function is as follows. Bifunctional enzyme that catalyzes the oxidative decarboxylation of UDP-glucuronic acid (UDP-GlcUA) to UDP-4-keto-arabinose (UDP-Ara4O) and the addition of a formyl group to UDP-4-amino-4-deoxy-L-arabinose (UDP-L-Ara4N) to form UDP-L-4-formamido-arabinose (UDP-L-Ara4FN). The modified arabinose is attached to lipid A and is required for resistance to polymyxin and cationic antimicrobial peptides. The protein is Bifunctional polymyxin resistance protein ArnA of Shewanella sediminis (strain HAW-EB3).